The following is a 347-amino-acid chain: N-acetyl-gamma-glutamyl-phosphate reductase (347 aa).

The active site involves Cys-151.

It belongs to the NAGSA dehydrogenase family. Type 1 subfamily.

The protein localises to the cytoplasm. The catalysed reaction is N-acetyl-L-glutamate 5-semialdehyde + phosphate + NADP(+) = N-acetyl-L-glutamyl 5-phosphate + NADPH + H(+). The protein operates within amino-acid biosynthesis; L-arginine biosynthesis; N(2)-acetyl-L-ornithine from L-glutamate: step 3/4. Catalyzes the NADPH-dependent reduction of N-acetyl-5-glutamyl phosphate to yield N-acetyl-L-glutamate 5-semialdehyde. The protein is N-acetyl-gamma-glutamyl-phosphate reductase of Corynebacterium glutamicum (strain R).